The chain runs to 425 residues: Glutamate-1-semialdehyde 2,1-aminomutase (425 aa).

Position 265 is an N6-(pyridoxal phosphate)lysine (lysine 265).

Belongs to the class-III pyridoxal-phosphate-dependent aminotransferase family. HemL subfamily. As to quaternary structure, homodimer. It depends on pyridoxal 5'-phosphate as a cofactor.

The protein resides in the cytoplasm. The catalysed reaction is (S)-4-amino-5-oxopentanoate = 5-aminolevulinate. Its pathway is porphyrin-containing compound metabolism; protoporphyrin-IX biosynthesis; 5-aminolevulinate from L-glutamyl-tRNA(Glu): step 2/2. The polypeptide is Glutamate-1-semialdehyde 2,1-aminomutase (Clostridium perfringens (strain ATCC 13124 / DSM 756 / JCM 1290 / NCIMB 6125 / NCTC 8237 / Type A)).